Reading from the N-terminus, the 252-residue chain is NADH-quinone oxidoreductase subunit E (252 aa).

[2Fe-2S] cluster-binding residues include cysteine 114, cysteine 119, cysteine 155, and cysteine 159. The interval 211 to 252 is disordered; it reads LAGLPDQRPDEGQGGPGAPTLAGLQVARKNDMQAPPTPGADE.

It belongs to the complex I 24 kDa subunit family. The cofactor is [2Fe-2S] cluster.

It carries out the reaction a quinone + NADH + 5 H(+)(in) = a quinol + NAD(+) + 4 H(+)(out). Its function is as follows. NDH-1 shuttles electrons from NADH, via FMN and iron-sulfur (Fe-S) centers, to quinones in the respiratory chain. The immediate electron acceptor for the enzyme in this species is believed to be menaquinone. Couples the redox reaction to proton translocation (for every two electrons transferred, four hydrogen ions are translocated across the cytoplasmic membrane), and thus conserves the redox energy in a proton gradient. This Mycobacterium bovis (strain ATCC BAA-935 / AF2122/97) protein is NADH-quinone oxidoreductase subunit E (nuoE).